A 496-amino-acid polypeptide reads, in one-letter code: Genome polyprotein (496 aa).

Topologically, residues 1–447 are extracellular; sequence SRCTHLENRD…HTVLGGAFNS (447 aa). Disulfide bonds link cysteine 3/cysteine 30, cysteine 60/cysteine 116, cysteine 60/cysteine 121, cysteine 74/cysteine 105, cysteine 92/cysteine 116, and cysteine 92/cysteine 121. A fusion peptide region spans residues 98 to 111; sequence DRGWGNHCGLFGKG. N-linked (GlcNAc...) asparagine; by host glycosylation is present at asparagine 154. 2 disulfide bridges follow: cysteine 186-cysteine 290 and cysteine 307-cysteine 338. Residues 448-468 form a helical membrane-spanning segment; the sequence is IFGGVGFLPKLLMGVALAWLG. Over 469–479 the chain is Cytoplasmic; that stretch reads LNTRNPTMSIS. The helical transmembrane segment at 480–496 threads the bilayer; it reads FLLTGGLVLAMTLGVGA.

Homodimer; in the endoplasmic reticulum and Golgi. Post-translationally, N-glycosylated.

Its subcellular location is the virion membrane. The protein resides in the host endoplasmic reticulum membrane. Its function is as follows. Binds to host cell surface receptor and mediates fusion between viral and cellular membranes. Envelope protein is synthesized in the endoplasmic reticulum in the form of heterodimer with protein prM. They play a role in virion budding in the ER, and the newly formed immature particle is covered with 60 spikes composed of heterodimer between precursor prM and envelope protein E. The virion is transported to the Golgi apparatus where the low pH causes dissociation of PrM-E heterodimers and formation of E homodimers. prM-E cleavage is ineficient, and many virions are only partially matured. These uncleaved prM would play a role in immune evasion. The sequence is that of Genome polyprotein from Louping ill virus (strain SB 526) (Li).